A 221-amino-acid chain; its full sequence is uncharacterized protein (221 aa).

The tract at residues methionine 1–proline 30 is disordered. Residues arginine 12–arginine 25 show a composition bias toward polar residues. Residues valine 37–isoleucine 57 form a helical membrane-spanning segment.

Its subcellular location is the membrane. This is an uncharacterized protein from Arabidopsis thaliana (Mouse-ear cress).